A 433-amino-acid polypeptide reads, in one-letter code: C2H2 type master regulator of conidiophore development brlA (433 aa).

2 disordered regions span residues 23–54 (PSEC…SMAS) and 238–268 (TFKS…RMSG). The segment covering 30–48 (TSSFSPLDSPTPTPTSLYS) has biased composition (low complexity). A compositionally biased stretch (polar residues) spans 238 to 264 (TFKSHTPSTPHRSVSMGTPSGSDTPVS). 2 consecutive C2H2-type zinc fingers follow at residues 321–345 (FKCK…MKSH) and 351–376 (HVCW…TKTH). Residues 391–423 (ETSQDFDPDFRGQLTPDGRPIYGSKLEDSMPDC) are disordered.

Its subcellular location is the nucleus. In terms of biological role, brlA, abaA and wetA are pivotal regulators of conidiophore development and conidium maturation. They act individually and together to regulate their own expression and that of numerous other sporulation-specific genes. Binds promoters of target genes at brlA response elements (BREs) containing the conserved sequence 5'-(C/A)(A/G)AGGG(G/A)-3'. The sequence is that of C2H2 type master regulator of conidiophore development brlA from Penicillium camemberti (strain FM 013).